Here is a 272-residue protein sequence, read N- to C-terminus: Ras-related protein RSR1 (272 aa).

10–17 (GAGGVGKS) contributes to the GTP binding site. The Effector region signature appears at 32–40 (YDPTIEDSY). GTP is bound by residues 57–61 (DTAGI) and 116–119 (NKAD). Positions 177–272 (DARNQSQQFS…KKNASTCTIL (96 aa)) are disordered. 2 stretches are compositionally biased toward polar residues: residues 180–232 (NQSQ…STPV) and 245–258 (SGSS…ATSQ). Cys-269 is modified (cysteine methyl ester). The S-geranylgeranyl cysteine moiety is linked to residue Cys-269. A propeptide spans 270–272 (TIL) (removed in mature form).

It belongs to the small GTPase superfamily. Ras family.

The protein resides in the cell membrane. The catalysed reaction is GTP + H2O = GDP + phosphate + H(+). With respect to regulation, alternates between an inactive form bound to GDP and an active form bound to GTP. Activated by a guanine nucleotide-exchange factor (GEF) and inactivated by a GTPase-activating protein (GAP). Functionally, ras-related protein which binds GDP/GTP and possesses intrinsic GTPase activity. Involved in development of cell polarity during the cell division cycle, and essential for bud emergence. In Saccharomyces cerevisiae (strain ATCC 204508 / S288c) (Baker's yeast), this protein is Ras-related protein RSR1.